The chain runs to 260 residues: Late transcription factor 1 (260 aa).

The protein belongs to the chordopoxvirinae VLTF-1 family. Interacts with the late transcription factors VLTF-2 and VLTF-3. Interacts with the late transcription elongation factor H5/VLTF-4. Interacts with itself.

Functionally, associates with RNA polymerase to initiate transcription from late gene promoters. In Vertebrata (FPV), this protein is Late transcription factor 1 (VLTF1).